The following is a 252-amino-acid chain: Triosephosphate isomerase (252 aa).

Residue 9–11 (NWK) coordinates substrate. H95 serves as the catalytic Electrophile. Catalysis depends on E167, which acts as the Proton acceptor. Substrate contacts are provided by residues G173, S213, and 234–235 (GG).

It belongs to the triosephosphate isomerase family. In terms of assembly, homodimer.

The protein localises to the cytoplasm. It catalyses the reaction D-glyceraldehyde 3-phosphate = dihydroxyacetone phosphate. It participates in carbohydrate biosynthesis; gluconeogenesis. Its pathway is carbohydrate degradation; glycolysis; D-glyceraldehyde 3-phosphate from glycerone phosphate: step 1/1. In terms of biological role, involved in the gluconeogenesis. Catalyzes stereospecifically the conversion of dihydroxyacetone phosphate (DHAP) to D-glyceraldehyde-3-phosphate (G3P). The sequence is that of Triosephosphate isomerase from Lactiplantibacillus plantarum (strain ATCC BAA-793 / NCIMB 8826 / WCFS1) (Lactobacillus plantarum).